The following is a 542-amino-acid chain: CTP synthase (542 aa).

The amidoligase domain stretch occupies residues 1-265 (MARYIFITGG…DQEVLAAFGI (265 aa)). Serine 13 serves as a coordination point for CTP. Serine 13 contributes to the UTP binding site. 14–19 (SLGKGL) serves as a coordination point for ATP. Tyrosine 54 provides a ligand contact to L-glutamine. Aspartate 71 is a binding site for ATP. Residues aspartate 71 and glutamate 139 each coordinate Mg(2+). CTP-binding positions include 146–148 (DIE), 186–191 (KTKPTQ), and lysine 222. Residues 186–191 (KTKPTQ) and lysine 222 contribute to the UTP site. 238-240 (RDV) is a binding site for ATP. A Glutamine amidotransferase type-1 domain is found at 291–541 (TIAIVGKYTG…IAAALEQSRL (251 aa)). An L-glutamine-binding site is contributed by glycine 353. Cysteine 380 serves as the catalytic Nucleophile; for glutamine hydrolysis. Residues 381–384 (FGMQ), glutamate 404, and arginine 469 contribute to the L-glutamine site. Residues histidine 514 and glutamate 516 contribute to the active site.

It belongs to the CTP synthase family. Homotetramer.

The catalysed reaction is UTP + L-glutamine + ATP + H2O = CTP + L-glutamate + ADP + phosphate + 2 H(+). It catalyses the reaction L-glutamine + H2O = L-glutamate + NH4(+). The enzyme catalyses UTP + NH4(+) + ATP = CTP + ADP + phosphate + 2 H(+). It functions in the pathway pyrimidine metabolism; CTP biosynthesis via de novo pathway; CTP from UDP: step 2/2. Its activity is regulated as follows. Allosterically activated by GTP, when glutamine is the substrate; GTP has no effect on the reaction when ammonia is the substrate. The allosteric effector GTP functions by stabilizing the protein conformation that binds the tetrahedral intermediate(s) formed during glutamine hydrolysis. Inhibited by the product CTP, via allosteric rather than competitive inhibition. Functionally, catalyzes the ATP-dependent amination of UTP to CTP with either L-glutamine or ammonia as the source of nitrogen. Regulates intracellular CTP levels through interactions with the four ribonucleotide triphosphates. In Methylocella silvestris (strain DSM 15510 / CIP 108128 / LMG 27833 / NCIMB 13906 / BL2), this protein is CTP synthase.